Consider the following 563-residue polypeptide: Inorganic phosphate transporter PT2 (563 aa).

Disordered regions lie at residues 1-51 (MAPR…SGEE) and 67-96 (DGGA…PAYS). Topologically, residues 1-127 (MAPRYHSAAE…NGEKQSLLVP (127 aa)) are extracellular. A helical transmembrane segment spans residues 128–148 (CLAVFSSNYNFTVTSIALFLM). At 149-168 (NQDPLYKDASDTVVGSSTVK) the chain is on the cytoplasmic side. The helical transmembrane segment at 169–189 (MLSYAGAIVGMCTMGYLGDLI) threads the bilayer. At 190–192 (GRR) the chain is on the extracellular side. A helical membrane pass occupies residues 193 to 213 (LAMILTLALVFIGALLSSICA). At 214-217 (WGDG) the chain is on the cytoplasmic side. The chain crosses the membrane as a helical span at residues 218 to 238 (VTVLVIMGVCRFVLGVGSGGV). The Extracellular segment spans residues 239-263 (YPLSAVSAAEGAGSEKSNDRSMRVS). The helical transmembrane segment at 264 to 284 (WAYSMNVPGIMFPYIVALVLW) threads the bilayer. Topologically, residues 285–291 (CTTHNVD) are cytoplasmic. A helical membrane pass occupies residues 292 to 312 (VCFRILLGFGALPALLIWLPA). At 313-342 (WRMKEDRAYVAKDFAKHLAGVFVSRSYWRQ) the chain is on the extracellular side. A helical transmembrane segment spans residues 343 to 363 (LLGTGVCWLLYDVTAYGILLV). Residues 364-380 (QPEITQSIWGNSSSVTD) are Cytoplasmic-facing. Residues 381 to 401 (VIWQNIILNGMGIPGCFMGIL) traverse the membrane as a helical segment. Topologically, residues 402-412 (VLKQMGVKWLQ) are extracellular. The chain crosses the membrane as a helical span at residues 413–433 (FWGFVGLAVSAFLMAATVEIL). The Cytoplasmic segment spans residues 434–440 (QGKAWAQ). Residues 441 to 461 (LVLLCIVNFFINWGASITTFI) form a helical membrane-spanning segment. Residues 462 to 477 (LPSLVFPPEVRSTYSG) lie on the Extracellular side of the membrane. Residues 478 to 498 (ISAALGKIGAVGGIYTMKAIL) traverse the membrane as a helical segment. Residues 499 to 504 (STGGLT) lie on the Cytoplasmic side of the membrane. A helical transmembrane segment spans residues 505–525 (PMMICAGVPSLAAAILTWFYV). The Extracellular segment spans residues 526–563 (DPVPNTLRSSFLQCFGSLAGSCPFIDCRKFRRGSRAFE).

Belongs to the major facilitator superfamily. Phosphate:H(+) symporter (TC 2.A.1.9) family.

It localises to the cell membrane. It carries out the reaction phosphate(in) = phosphate(out). Inorganic phosphate transporter. Activity is likely sodium-independent. Exhibits higher activity under acidic pH, implying that either the monovalent form of phosphate is the preferred substrate or the transport activity is H(+)-dependent. The sequence is that of Inorganic phosphate transporter PT2 from Toxoplasma gondii (strain ATCC 50861 / VEG).